Reading from the N-terminus, the 119-residue chain is DNA-binding protein inhibitor ID-3 (119 aa).

Residues 28 to 80 (RGKGPAAEEPLSLLDDMNHCYSRLRELVPGVPRGTQLSQVEILQRVIDYILDL) form the bHLH domain.

Homodimer, and heterodimer with other HLH proteins. Interacts with COPS5 and COPS7A. Interacts with IFI204. Interacts with GATA4 and NKX2-5. Interacts with ANKRD2; both proteins cooperate in myoblast differentiation. Interacts with CLOCK and BMAL1.

Its subcellular location is the nucleus. Transcriptional regulator (lacking a basic DNA binding domain) which negatively regulates the basic helix-loop-helix (bHLH) transcription factors by forming heterodimers and inhibiting their DNA binding and transcriptional activity. Implicated in regulating a variety of cellular processes, including cellular growth, senescence, differentiation, apoptosis, angiogenesis, and neoplastic transformation. Involved in myogenesis by inhibiting skeletal muscle and cardiac myocyte differentiation and promoting muscle precursor cells proliferation. Inhibits the binding of E2A-containing protein complexes to muscle creatine kinase E-box enhancer. Regulates the circadian clock by repressing the transcriptional activator activity of the CLOCK-BMAL1 heterodimer. The protein is DNA-binding protein inhibitor ID-3 (ID3) of Canis lupus familiaris (Dog).